An 88-amino-acid polypeptide reads, in one-letter code: UPF0223 protein OB1419 (88 aa).

This sequence belongs to the UPF0223 family.

The polypeptide is UPF0223 protein OB1419 (Oceanobacillus iheyensis (strain DSM 14371 / CIP 107618 / JCM 11309 / KCTC 3954 / HTE831)).